We begin with the raw amino-acid sequence, 734 residues long: Rho GTPase-activating protein gacL (734 aa).

A Rho-GAP domain is found at 141 to 339 (ISLDTLIAKE…QMILHYDTLF (199 aa)). 3 WD repeats span residues 381–430 (GHNK…FIKE), 539–579 (LFMK…TIHQ), and 585–623 (KRPK…LEHK).

The protein localises to the cytoplasm. Rho GTPase-activating protein involved in the signal transduction pathway. This chain is Rho GTPase-activating protein gacL (gacL), found in Dictyostelium discoideum (Social amoeba).